Consider the following 187-residue polypeptide: Pumilio homolog 26 (187 aa).

A Pumilio 1; degenerate repeat occupies V20 to T42. A Pumilio 2; degenerate repeat occupies S43–V78. The Pumilio 3; degenerate repeat unit spans residues I79 to L116. One copy of the Pumilio 4; degenerate repeat lies at R117–L154. One copy of the Pumilio 5 repeat lies at K155 to V187.

The protein localises to the cytoplasm. Its function is as follows. Sequence-specific RNA-binding protein that regulates translation and mRNA stability by binding the 3'-UTR of target mRNAs. This is Pumilio homolog 26 (APUM26) from Arabidopsis thaliana (Mouse-ear cress).